An 892-amino-acid chain; its full sequence is DNA mismatch repair protein MutS (892 aa).

607 to 614 (GPNMSGKS) lines the ATP pocket. The interval 833–855 (EESQLSFFGAEQSSKKQDKPALD) is disordered. The span at 845–855 (SSKKQDKPALD) shows a compositional bias: basic and acidic residues.

It belongs to the DNA mismatch repair MutS family.

This protein is involved in the repair of mismatches in DNA. It is possible that it carries out the mismatch recognition step. This protein has a weak ATPase activity. This chain is DNA mismatch repair protein MutS, found in Bacillus anthracis (strain A0248).